Reading from the N-terminus, the 84-residue chain is Toxin To10 (84 aa).

An N-terminal signal peptide occupies residues 1–19; it reads MNYSTLIAVASLLTAGTES. In terms of domain architecture, LCN-type CS-alpha/beta spans 21–80; the sequence is KDGYPVEGSCAFPCGYDNAYCDKLCKERKADSGYCYWVNILCYCYGLPDNAAIKGYGRCK. 4 disulfide bridges follow: Cys-30–Cys-79, Cys-34–Cys-55, Cys-41–Cys-62, and Cys-45–Cys-64. Residue Pro-81 is modified to Proline amide.

The protein belongs to the long (4 C-C) scorpion toxin superfamily. Sodium channel inhibitor family. Alpha subfamily. In terms of tissue distribution, expressed by the venom gland.

It is found in the secreted. Alpha toxins bind voltage-independently at site-3 of sodium channels (Nav) and inhibit the inactivation of the activated channels, thereby blocking neuronal transmission. This is Toxin To10 from Tityus obscurus (Amazonian scorpion).